A 402-amino-acid chain; its full sequence is Propionate kinase (402 aa).

N11 and K18 together coordinate ATP. A Mg(2+)-binding site is contributed by N11. R86 contributes to the substrate binding site. D143 (proton donor/acceptor) is an active-site residue. Residues H175, 203–207, 278–280, and 326–330 each bind ATP; these read HLGNG, DLR, and GIGEN.

The protein belongs to the acetokinase family. TdcD subfamily. In terms of assembly, homodimer. Mg(2+) serves as cofactor.

The catalysed reaction is propanoate + ATP = propanoyl phosphate + ADP. The protein operates within amino-acid degradation; L-threonine degradation via propanoate pathway; propanoate from L-threonine: step 4/4. In terms of biological role, catalyzes the conversion of propionyl phosphate and ADP to propionate and ATP. The sequence is that of Propionate kinase from Enterobacter sp. (strain 638).